We begin with the raw amino-acid sequence, 142 residues long: Large ribosomal subunit protein uL13 (142 aa).

Belongs to the universal ribosomal protein uL13 family. In terms of assembly, part of the 50S ribosomal subunit.

This protein is one of the early assembly proteins of the 50S ribosomal subunit, although it is not seen to bind rRNA by itself. It is important during the early stages of 50S assembly. The sequence is that of Large ribosomal subunit protein uL13 from Xylella fastidiosa (strain 9a5c).